A 321-amino-acid chain; its full sequence is Glucokinase (321 aa).

Alanine 8–threonine 13 provides a ligand contact to ATP.

The protein belongs to the bacterial glucokinase family.

It is found in the cytoplasm. It catalyses the reaction D-glucose + ATP = D-glucose 6-phosphate + ADP + H(+). The polypeptide is Glucokinase (Photorhabdus laumondii subsp. laumondii (strain DSM 15139 / CIP 105565 / TT01) (Photorhabdus luminescens subsp. laumondii)).